The sequence spans 184 residues: Glutathione-regulated potassium-efflux system ancillary protein KefG (184 aa).

It belongs to the NAD(P)H dehydrogenase (quinone) family. KefG subfamily. Interacts with KefB.

It is found in the cell inner membrane. The catalysed reaction is a quinone + NADH + H(+) = a quinol + NAD(+). The enzyme catalyses a quinone + NADPH + H(+) = a quinol + NADP(+). Its function is as follows. Regulatory subunit of a potassium efflux system that confers protection against electrophiles. Required for full activity of KefB. The chain is Glutathione-regulated potassium-efflux system ancillary protein KefG from Yersinia enterocolitica serotype O:8 / biotype 1B (strain NCTC 13174 / 8081).